A 342-amino-acid polypeptide reads, in one-letter code: tRNA-specific 2-thiouridylase MnmA (342 aa).

ATP is bound by residues 6 to 13 (GMSGGVDS) and leucine 32. Cysteine 99 functions as the Nucleophile in the catalytic mechanism. Cysteine 99 and cysteine 190 form a disulfide bridge. Glycine 124 contacts ATP. The segment at 140 to 142 (KDQ) is interaction with tRNA. The Cysteine persulfide intermediate role is filled by cysteine 190. The tract at residues 292-293 (RY) is interaction with tRNA.

It belongs to the MnmA/TRMU family.

The protein resides in the cytoplasm. The enzyme catalyses S-sulfanyl-L-cysteinyl-[protein] + uridine(34) in tRNA + AH2 + ATP = 2-thiouridine(34) in tRNA + L-cysteinyl-[protein] + A + AMP + diphosphate + H(+). In terms of biological role, catalyzes the 2-thiolation of uridine at the wobble position (U34) of tRNA, leading to the formation of s(2)U34. The sequence is that of tRNA-specific 2-thiouridylase MnmA from Hydrogenobaculum sp. (strain Y04AAS1).